The primary structure comprises 172 residues: Protein-export protein SecB (172 aa).

This sequence belongs to the SecB family. Homotetramer, a dimer of dimers. One homotetramer interacts with 1 SecA dimer.

Its subcellular location is the cytoplasm. Its function is as follows. One of the proteins required for the normal export of preproteins out of the cell cytoplasm. It is a molecular chaperone that binds to a subset of precursor proteins, maintaining them in a translocation-competent state. It also specifically binds to its receptor SecA. The protein is Protein-export protein SecB of Bordetella avium (strain 197N).